The sequence spans 133 residues: Putative pre-16S rRNA nuclease (133 aa).

The protein belongs to the YqgF nuclease family.

Its subcellular location is the cytoplasm. Its function is as follows. Could be a nuclease involved in processing of the 5'-end of pre-16S rRNA. The chain is Putative pre-16S rRNA nuclease from Alcanivorax borkumensis (strain ATCC 700651 / DSM 11573 / NCIMB 13689 / SK2).